We begin with the raw amino-acid sequence, 188 residues long: UPF0301 protein XF_2228 (188 aa).

It belongs to the UPF0301 (AlgH) family.

This is UPF0301 protein XF_2228 from Xylella fastidiosa (strain 9a5c).